The sequence spans 411 residues: Transforming growth factor beta regulator 1 (411 aa).

Disordered stretches follow at residues 1–29 (MSLL…PKKS) and 119–146 (GPIS…KGKE). An N-acetylserine modification is found at Ser2. Position 10 is a phosphoserine (Ser10). Residues 182-241 (VFPIGLGGLTVYSLGEIITDRPGFHDESAIYPVGYCSTRIYASMKCPDQKCLYTCQIKDG) form the FYR N-terminal domain. Residues 242 to 321 (GVQPQFEIVP…RKCINYQWVK (80 aa)) form the FYR C-terminal domain.

It belongs to the TBRG1 family. Interacts with CDKN2A and MDM2. Ubiquitinated; mediated by MDM2 and leading to its subsequent proteasomal degradation. Widely expressed at low levels in most tissues, with highest levels in pancreas, lung and liver. Expression is decreased in primary tumors including lung, liver, breast, pancreas and kidney carcinomas, chronic lymphocytic leukemia and diffuse large B-cell lymphoma.

Its subcellular location is the nucleus. Functionally, acts as a growth inhibitor. Can activate p53/TP53, causes G1 arrest and collaborates with CDKN2A to restrict proliferation, but does not require either protein to inhibit DNA synthesis. Redistributes CDKN2A into the nucleoplasm. Involved in maintaining chromosomal stability. In Homo sapiens (Human), this protein is Transforming growth factor beta regulator 1 (TBRG1).